The chain runs to 335 residues: (+)-caryolan-1-ol synthase (335 aa).

5 residues coordinate Mg(2+): Asp83, Asp87, Asn220, Ser224, and Glu228. Residues 83 to 87 (DDEFD) carry the DDXXD motif motif. An NSE/DTE motif motif is present at residues 220–228 (NDICSFEKE).

The protein belongs to the terpene synthase family. Mg(2+) serves as cofactor. Mn(2+) is required as a cofactor.

The catalysed reaction is (2E,6E)-farnesyl diphosphate = (+)-(E)-beta-caryophyllene + diphosphate. The enzyme catalyses (+)-(E)-beta-caryophyllene + H2O = (+)-caryolan-1-ol. Its pathway is secondary metabolite biosynthesis; terpenoid biosynthesis. Sesquiterpene cyclase that first catalyzes the cyclization of farnesyl diphosphate (FPP) to the bicyclic sesquiterpene (+)-beta-caryophyllene intermediate, and then its conversion to (+)-caryolan-1-ol via a second cyclization and the addition of a water molecule. The chain is (+)-caryolan-1-ol synthase (gcoA) from Streptomyces griseus subsp. griseus (strain JCM 4626 / CBS 651.72 / NBRC 13350 / KCC S-0626 / ISP 5235).